The sequence spans 249 residues: Triosephosphate isomerase (249 aa).

8–10 (NWK) lines the substrate pocket. The active-site Electrophile is histidine 95. Glutamate 166 (proton acceptor) is an active-site residue. Substrate-binding positions include glycine 172, serine 211, and 232-233 (GG).

Belongs to the triosephosphate isomerase family. In terms of assembly, homodimer.

It localises to the cytoplasm. The catalysed reaction is D-glyceraldehyde 3-phosphate = dihydroxyacetone phosphate. Its pathway is carbohydrate biosynthesis; gluconeogenesis. The protein operates within carbohydrate degradation; glycolysis; D-glyceraldehyde 3-phosphate from glycerone phosphate: step 1/1. In terms of biological role, involved in the gluconeogenesis. Catalyzes stereospecifically the conversion of dihydroxyacetone phosphate (DHAP) to D-glyceraldehyde-3-phosphate (G3P). The protein is Triosephosphate isomerase of Granulibacter bethesdensis (strain ATCC BAA-1260 / CGDNIH1).